Here is a 293-residue protein sequence, read N- to C-terminus: Homoserine kinase (293 aa).

84–94 (PISRGLGSSSA) serves as a coordination point for ATP.

This sequence belongs to the GHMP kinase family. Homoserine kinase subfamily.

The protein resides in the cytoplasm. The enzyme catalyses L-homoserine + ATP = O-phospho-L-homoserine + ADP + H(+). Its pathway is amino-acid biosynthesis; L-threonine biosynthesis; L-threonine from L-aspartate: step 4/5. In terms of biological role, catalyzes the ATP-dependent phosphorylation of L-homoserine to L-homoserine phosphate. This Wolinella succinogenes (strain ATCC 29543 / DSM 1740 / CCUG 13145 / JCM 31913 / LMG 7466 / NCTC 11488 / FDC 602W) (Vibrio succinogenes) protein is Homoserine kinase.